A 234-amino-acid chain; its full sequence is MRIEKLLNAALLAGAVSAHTIMTSLVVDGTEYPPGHAVRIPSYNGPITDVTSNSVACNGPPNPTTPSSEIIMVRAGSTIQGKWRHTETDVIDPSHKGPVMAYLKKVDDAINDPGTGDGWFKIWEDGLHDDGTWAVDDLIAANGYQDIPIPPCLADGQYLLRAEIIALHGASQPGGAQLYMECAQIGVVGGSGTANPSTVAFPGAYKADDPGITVNIYWPPLEEYIIPGPDPFTC.

An N-terminal signal peptide occupies residues 1–18; that stretch reads MRIEKLLNAALLAGAVSA. Cu(2+) contacts are provided by His-19 and His-95. Cys-57 and Cys-182 are joined by a disulfide. Residues His-168 and Gln-177 each contribute to the O2 site. A Cu(2+)-binding site is contributed by Tyr-179.

Belongs to the polysaccharide monooxygenase AA9 family. Cu(2+) is required as a cofactor.

The protein resides in the secreted. It carries out the reaction [(1-&gt;4)-beta-D-glucosyl]n+m + reduced acceptor + O2 = 4-dehydro-beta-D-glucosyl-[(1-&gt;4)-beta-D-glucosyl]n-1 + [(1-&gt;4)-beta-D-glucosyl]m + acceptor + H2O.. In terms of biological role, lytic polysaccharide monooxygenase (LPMO) that depolymerizes crystalline and amorphous polysaccharides via the oxidation of scissile alpha- or beta-(1-4)-glycosidic bonds, yielding C1 or C4 oxidation products. Catalysis by LPMOs requires the reduction of the active-site copper from Cu(II) to Cu(I) by a reducing agent and H(2)O(2) or O(2) as a cosubstrate. The protein is AA9 family lytic polysaccharide monooxygenase D of Malbranchea cinnamomea (Thermophilic fungus).